Consider the following 474-residue polypeptide: tRNA modification GTPase MnmE (474 aa).

Residues Arg23, Glu86, and Lys125 each contribute to the (6S)-5-formyl-5,6,7,8-tetrahydrofolate site. The TrmE-type G domain maps to 221–396 (GIPVAIVGEP…LKEKLLEYVN (176 aa)). Residue Asn231 coordinates K(+). Residues 231 to 236 (NVGKST), 250 to 256 (SEIAGTT), and 275 to 278 (DTAG) contribute to the GTP site. Ser235 is a Mg(2+) binding site. Residues Ser250, Ile252, and Thr255 each contribute to the K(+) site. Thr256 provides a ligand contact to Mg(2+). Lys474 serves as a coordination point for (6S)-5-formyl-5,6,7,8-tetrahydrofolate.

This sequence belongs to the TRAFAC class TrmE-Era-EngA-EngB-Septin-like GTPase superfamily. TrmE GTPase family. Homodimer. Heterotetramer of two MnmE and two MnmG subunits. K(+) serves as cofactor.

It is found in the cytoplasm. In terms of biological role, exhibits a very high intrinsic GTPase hydrolysis rate. Involved in the addition of a carboxymethylaminomethyl (cmnm) group at the wobble position (U34) of certain tRNAs, forming tRNA-cmnm(5)s(2)U34. The protein is tRNA modification GTPase MnmE of Christiangramia forsetii (strain DSM 17595 / CGMCC 1.15422 / KT0803) (Gramella forsetii).